Here is an 82-residue protein sequence, read N- to C-terminus: Modifier of protein aggregation 4 (82 aa).

Positions 1–23 are enriched in basic and acidic residues; that stretch reads MTRGNQRDLAREKNQKKLADQKK. 2 disordered regions span residues 1–41 and 63–82; these read MTRG…MDAR and EAAA…PLKM.

Belongs to the SERF family.

The protein localises to the cytoplasm. It is found in the cytosol. Its subcellular location is the nucleus. Its function is as follows. Positive regulator of protein aggregation and age-related proteotoxicity. Induces conformational changes in aggregation-prone proteins, driving them into compact formations preceding the formation of aggregates. The sequence is that of Modifier of protein aggregation 4 from Caenorhabditis elegans.